Reading from the N-terminus, the 475-residue chain is Tryptophan synthase beta chain 2, chloroplastic (475 aa).

The span at 1–21 shows a compositional bias: polar residues; it reads MATASTAATFRPSSVSASSEL. Residues 1–44 are disordered; it reads MATASTAATFRPSSVSASSELTHLRSPSKLPKFTPLPSARSRSS. The transit peptide at 1-51 directs the protein to the chloroplast; the sequence is MATASTAATFRPSSVSASSELTHLRSPSKLPKFTPLPSARSRSSSSFSVSC. Thr52 is modified (N-acetylthreonine). Lys170 is modified (N6-(pyridoxal phosphate)lysine).

It belongs to the TrpB family. In terms of assembly, tetramer of two alpha and two beta chains. Pyridoxal 5'-phosphate is required as a cofactor.

The protein localises to the plastid. Its subcellular location is the chloroplast. The catalysed reaction is (1S,2R)-1-C-(indol-3-yl)glycerol 3-phosphate + L-serine = D-glyceraldehyde 3-phosphate + L-tryptophan + H2O. It functions in the pathway amino-acid biosynthesis; L-tryptophan biosynthesis; L-tryptophan from chorismate: step 5/5. Its function is as follows. The beta subunit is responsible for the synthesis of L-tryptophan from indole and L-serine. The chain is Tryptophan synthase beta chain 2, chloroplastic (TSB2) from Arabidopsis thaliana (Mouse-ear cress).